The sequence spans 369 residues: 4-hydroxy-3-methylbut-2-en-1-yl diphosphate synthase (flavodoxin) (369 aa).

4 residues coordinate [4Fe-4S] cluster: Cys270, Cys273, Cys305, and Glu312.

Belongs to the IspG family. [4Fe-4S] cluster is required as a cofactor.

The catalysed reaction is (2E)-4-hydroxy-3-methylbut-2-enyl diphosphate + oxidized [flavodoxin] + H2O + 2 H(+) = 2-C-methyl-D-erythritol 2,4-cyclic diphosphate + reduced [flavodoxin]. Its pathway is isoprenoid biosynthesis; isopentenyl diphosphate biosynthesis via DXP pathway; isopentenyl diphosphate from 1-deoxy-D-xylulose 5-phosphate: step 5/6. Converts 2C-methyl-D-erythritol 2,4-cyclodiphosphate (ME-2,4cPP) into 1-hydroxy-2-methyl-2-(E)-butenyl 4-diphosphate. This Psychromonas ingrahamii (strain DSM 17664 / CCUG 51855 / 37) protein is 4-hydroxy-3-methylbut-2-en-1-yl diphosphate synthase (flavodoxin).